The following is a 290-amino-acid chain: 33 kDa chaperonin (290 aa).

2 cysteine pairs are disulfide-bonded: C235-C237 and C268-C271.

It belongs to the HSP33 family. Post-translationally, under oxidizing conditions two disulfide bonds are formed involving the reactive cysteines. Under reducing conditions zinc is bound to the reactive cysteines and the protein is inactive.

It is found in the cytoplasm. Redox regulated molecular chaperone. Protects both thermally unfolding and oxidatively damaged proteins from irreversible aggregation. Plays an important role in the bacterial defense system toward oxidative stress. This is 33 kDa chaperonin from Streptococcus pyogenes serotype M49.